The chain runs to 159 residues: Probable minor fimbrial protein (159 aa).

Residues 1 to 6 (MKKMHG) constitute a propeptide, leader sequence. An N-methylphenylalanine modification is found at F7. Residues 7 to 27 (FTLIELMIVVAIIGVLASTAL) form a helical membrane-spanning segment. 2 cysteine pairs are disulfide-bonded: C56–C71 and C140–C153.

The protein belongs to the N-Me-Phe pilin family. In terms of assembly, the pili are polar flexible filaments of about 5.4 nanometers diameter and 2.5 micrometers average length; they consist of only a single polypeptide chain arranged in a helical configuration of five subunits per turn in the assembled pilus.

The protein localises to the fimbrium. Its subcellular location is the membrane. The polypeptide is Probable minor fimbrial protein (fimZ) (Dichelobacter nodosus (Bacteroides nodosus)).